Reading from the N-terminus, the 320-residue chain is Cytochrome f (320 aa).

Positions 1 to 35 (MQTINTFSWINQRITRSISVLLLVYIITRTSISSA) are cleaved as a signal peptide. Residues Tyr36, Cys56, Cys59, and His60 each contribute to the heme site. Residues 286–306 (VQGLLFFLASVILAQIFLVLK) form a helical membrane-spanning segment.

Belongs to the cytochrome f family. The 4 large subunits of the cytochrome b6-f complex are cytochrome b6, subunit IV (17 kDa polypeptide, petD), cytochrome f and the Rieske protein, while the 4 small subunits are PetG, PetL, PetM and PetN. The complex functions as a dimer. Requires heme as cofactor.

It is found in the plastid thylakoid membrane. Functionally, component of the cytochrome b6-f complex, which mediates electron transfer between photosystem II (PSII) and photosystem I (PSI), cyclic electron flow around PSI, and state transitions. The chain is Cytochrome f from Cuscuta exaltata (Tall dodder).